The primary structure comprises 299 residues: GTPase Era (299 aa).

Positions 4-171 (KSGFVAILGR…VDILSENLDE (168 aa)) constitute an Era-type G domain. A G1 region spans residues 12–19 (GRPNVGKS). 12 to 19 (GRPNVGKS) lines the GTP pocket. The tract at residues 38–42 (QTTRN) is G2. Residues 59–62 (DTPG) are G3. GTP contacts are provided by residues 59–63 (DTPGI) and 121–124 (NKID). A G4 region spans residues 121–124 (NKID). The tract at residues 150-152 (ISA) is G5. The KH type-2 domain occupies 202 to 280 (TREEIPHSVA…FLETWVKVKK (79 aa)).

The protein belongs to the TRAFAC class TrmE-Era-EngA-EngB-Septin-like GTPase superfamily. Era GTPase family. Monomer.

It localises to the cytoplasm. Its subcellular location is the cell membrane. In terms of biological role, an essential GTPase that binds both GDP and GTP, with rapid nucleotide exchange. Plays a role in 16S rRNA processing and 30S ribosomal subunit biogenesis and possibly also in cell cycle regulation and energy metabolism. The protein is GTPase Era of Streptococcus pneumoniae (strain P1031).